A 327-amino-acid chain; its full sequence is Phenylalanine--tRNA ligase alpha subunit (327 aa).

Glutamate 252 provides a ligand contact to Mg(2+).

This sequence belongs to the class-II aminoacyl-tRNA synthetase family. Phe-tRNA synthetase alpha subunit type 1 subfamily. As to quaternary structure, tetramer of two alpha and two beta subunits. The cofactor is Mg(2+).

The protein localises to the cytoplasm. It carries out the reaction tRNA(Phe) + L-phenylalanine + ATP = L-phenylalanyl-tRNA(Phe) + AMP + diphosphate + H(+). The sequence is that of Phenylalanine--tRNA ligase alpha subunit from Yersinia pseudotuberculosis serotype O:1b (strain IP 31758).